The chain runs to 638 residues: Phosphomethylpyrimidine synthase (638 aa).

Substrate is bound by residues N236, M265, Y294, H330, 350–352 (SRG), 391–394 (DGLR), and E430. H434 provides a ligand contact to Zn(2+). Residue Y457 coordinates substrate. H498 contributes to the Zn(2+) binding site. [4Fe-4S] cluster-binding residues include C578, C581, and C586. Over residues 608–624 (AEGASQQEAEQGMQEMS) the composition is skewed to low complexity. A disordered region spans residues 608–633 (AEGASQQEAEQGMQEMSQKYKDAGRR).

The protein belongs to the ThiC family. Homodimer. [4Fe-4S] cluster serves as cofactor.

The catalysed reaction is 5-amino-1-(5-phospho-beta-D-ribosyl)imidazole + S-adenosyl-L-methionine = 4-amino-2-methyl-5-(phosphooxymethyl)pyrimidine + CO + 5'-deoxyadenosine + formate + L-methionine + 3 H(+). It participates in cofactor biosynthesis; thiamine diphosphate biosynthesis. In terms of biological role, catalyzes the synthesis of the hydroxymethylpyrimidine phosphate (HMP-P) moiety of thiamine from aminoimidazole ribotide (AIR) in a radical S-adenosyl-L-methionine (SAM)-dependent reaction. The protein is Phosphomethylpyrimidine synthase of Hahella chejuensis (strain KCTC 2396).